The sequence spans 96 residues: Plasminogen-like protein A (96 aa).

An N-terminal signal peptide occupies residues 1–19 (MEHKEVVLLLLLFLKSGQG). A PAN domain is found at 20–96 (EPLDDYVNAQ…RMRDVVLFEK (77 aa)). Disulfide bonds link Cys-49–Cys-73 and Cys-53–Cys-61.

As to expression, expressed in liver.

The protein localises to the secreted. In terms of biological role, may bind non-covalently to lysine binding sites present in the kringle structures of plasminogen. This may interfere with the binding of fibrin or alpha-2-antiplasmin to plasminogen and may result in the localization of activity at sites necessary for extracellular matrix destruction. In Homo sapiens (Human), this protein is Plasminogen-like protein A (PLGLA).